A 319-amino-acid chain; its full sequence is Cobalamin biosynthesis protein CobD (319 aa).

Transmembrane regions (helical) follow at residues Val54–Tyr76, Gly154–Tyr173, and Val301–Ile318.

It belongs to the CobD/CbiB family.

The protein localises to the cell membrane. It participates in cofactor biosynthesis; adenosylcobalamin biosynthesis. In terms of biological role, converts cobyric acid to cobinamide by the addition of aminopropanol on the F carboxylic group. In Halalkalibacterium halodurans (strain ATCC BAA-125 / DSM 18197 / FERM 7344 / JCM 9153 / C-125) (Bacillus halodurans), this protein is Cobalamin biosynthesis protein CobD.